Here is a 505-residue protein sequence, read N- to C-terminus: Probable glycine dehydrogenase (decarboxylating) subunit 2 (505 aa).

Residue K274 is modified to N6-(pyridoxal phosphate)lysine.

Belongs to the GcvP family. C-terminal subunit subfamily. In terms of assembly, the glycine cleavage system is composed of four proteins: P, T, L and H. In this organism, the P 'protein' is a heterodimer of two subunits. It depends on pyridoxal 5'-phosphate as a cofactor.

The enzyme catalyses N(6)-[(R)-lipoyl]-L-lysyl-[glycine-cleavage complex H protein] + glycine + H(+) = N(6)-[(R)-S(8)-aminomethyldihydrolipoyl]-L-lysyl-[glycine-cleavage complex H protein] + CO2. In terms of biological role, the glycine cleavage system catalyzes the degradation of glycine. The P protein binds the alpha-amino group of glycine through its pyridoxal phosphate cofactor; CO(2) is released and the remaining methylamine moiety is then transferred to the lipoamide cofactor of the H protein. The protein is Probable glycine dehydrogenase (decarboxylating) subunit 2 of Sulfurisphaera tokodaii (strain DSM 16993 / JCM 10545 / NBRC 100140 / 7) (Sulfolobus tokodaii).